A 1496-amino-acid polypeptide reads, in one-letter code: Carbamoyl-phosphate synthase [ammonia], mitochondrial (1496 aa).

Residues 1 to 33 (MTRILSVFKTAKTGVLNAAAHRYRGFSKAGVRL) constitute a mitochondrion transit peptide. The anthranilate phosphoribosyltransferase homolog stretch occupies residues 34–214 (MSVKAQTANL…TKVFGKGNPV (181 aa)). One can recognise a Glutamine amidotransferase type-1 domain in the interval 215 to 401 (RIVAVDCGVK…MSLIKKGKGT (187 aa)). The active-site For GATase activity is the Cys-290. ATP-grasp domains follow at residues 548–740 (SDKL…KIAL) and 1090–1281 (SAVL…KVMI). Residues 1352-1496 (FKLPQKGILI…YRQFGGAKPS (145 aa)) form the MGS-like domain. 6 residues coordinate N-acetyl-L-glutamate: Thr-1388, Thr-1391, Trp-1407, Asn-1433, Asn-1436, and Asn-1445.

It localises to the mitochondrion. The enzyme catalyses hydrogencarbonate + NH4(+) + 2 ATP = carbamoyl phosphate + 2 ADP + phosphate + 2 H(+). With respect to regulation, requires N-acetyl-L-glutamate (NAG) as an allosteric activator. Functionally, involved in the urea cycle of ureotelic animals where the enzyme plays an important role in removing excess ammonia from the cell. The polypeptide is Carbamoyl-phosphate synthase [ammonia], mitochondrial (Aquarana catesbeiana (American bullfrog)).